Here is a 1456-residue protein sequence, read N- to C-terminus: MLSASQFLKHRVSCLPMLNKVESDSTDGDPDDACQHPHDCNIFSVLVNGATDRLEGFFDESDEEDGDEVETPSTTTTAVSPSATMSAPSPTATAPTPHSGTHTPKSPLHSISHCPSFNSVAQALPHSLSPHSLCHTSSHEASRRGSAEQPSRTQSELARRIKTENILNSFHDSLEAAYEKCHGGANPEEHQSNKTEYFQQKLKGFAALDVDEQLIADYPVWLLKNVLIQGHLYITAKHMCFLSYLPRRQNANIRSGTLVKARKRSLREGTRYWCVLKNDSFSYYPDSTDVYFPAGTIDLSEALAAELCDDEGDVTEPESFRIVMPKKSVLFKADSHSAAHEWVKALQKEIFRAHNQGDTVRIVIPLQNIVDLEKTKIFEFATTIKTSVVESNETYAIDEYIFTFFKFGDDVLRTLTENGVEISGGNFSPRQSQLAVGHKHVTESVRDSTLLHASGHHHHFFHSAHHESDGKSNSKSHTSSRSHTPRNLTPQVTGEQPHERDEKRDSKLPRLPKFLRRFKDKVDDKCDDKPTLVPSFLKSRASSRRNSAEGSDRPNLASQRTSSSTLFPSAPPTPGSQPTTPGVHAPGSSTPGGSYGTTTPGTPASADSVSLAGTPGVAAPVGDIEGLNGNPMPAGIAAELKEKRKSGGATSSGAATGATTPGGAAAPGSTGNSSPGTPGGLGGPGAVGAGGPGVMGGAESAPAGTVPQQSHHAGISVVAPHDPAAAAAAADAAAPFTRGPGSGIPEIQDDSDSSDDDHWGHIGTAEVDEDPEQDTFKKKNKRFSTLSKVSDLWSGSTKHYGKHHTERLGDDDDKHLASAEEITESNERFQKRFALGTEERLIASYHCHLHRGGIPTYGKMYVSTNYVTFRSFLRTKTLMIVPLKVVENATKDSGFKFGYSGLVLTIQGYEEIFFEFASASHRDDAEVMLLRQLDIIRPHINDDIKSDDQYMLQSARLCTYEDALKAEANVEMPPVIIDGNLASVLPGLVTPQSKMLFTLLTIGSRGDVQPYISLGKALIEEGHRVRIATHSEFKDWIEGYGIEFKEVAGDPSELMKIMVDHGVFSVSFLRDAASKFRGWINELLASSWEACQGSDVLIESPSAMAGIHIAEALQIPYFRAFTMPWSRTRAYPHAFIVPDQKMGGSYNYLTYVMFDNVFWKGISGQVNRWRKKTLHLPRTNLDHMEQNKVPFLYNVSPAVLPPPVDFPDWIKITGYWFLDEGSKDYTPDDKLCRFMEKARNDGKKLVYIGFGSIVVSDPTALTKSVVESVLKADVRCILNKGWSDRLGKKDAKEPEIPLPEEVLQITNCPHDWLFPQIDACVHHGGSGTTGAGLRAGLPTIIKPFFGDQFFYANRVEDLGAGIHLRKLNVSQFSKALWEATHNERIIAKAAAVGRQIRSENGVISAIQAIYRDLDYARSLVQKKRGYTPTSDKEEETWTLVDDIERQMQDEVEKHNL.

Positions 60 to 70 (ESDEEDGDEVE) are enriched in acidic residues. 2 disordered regions span residues 60–113 (ESDE…SISH) and 128–156 (LSPH…TQSE). A compositionally biased stretch (low complexity) spans 71-104 (TPSTTTTAVSPSATMSAPSPTATAPTPHSGTHTP). Residues 137–146 (SSHEASRRGS) are compositionally biased toward basic and acidic residues. Residues 200-247 (QKLKGFAALDVDEQLIADYPVWLLKNVLIQGHLYITAKHMCFLSYLPR) form the GRAM 1 domain. In terms of domain architecture, PH spans 251–351 (ANIRSGTLVK…WVKALQKEIF (101 aa)). 2 disordered regions span residues 462-512 (HSAH…PRLP) and 524-776 (DKCD…QDTF). A compositionally biased stretch (basic and acidic residues) spans 496–508 (QPHERDEKRDSKL). The span at 556–567 (LASQRTSSSTLF) shows a compositional bias: polar residues. 2 stretches are compositionally biased toward low complexity: residues 576 to 606 (SQPT…PASA) and 647 to 676 (GGAT…SSPG). Positions 677–696 (TPGGLGGPGAVGAGGPGVMG) are enriched in gly residues. A compositionally biased stretch (low complexity) spans 719–735 (APHDPAAAAAAADAAAP). A GRAM 2 domain is found at 827 to 893 (ERFQKRFALG…KVVENATKDS (67 aa)). 12 residues coordinate UDP-alpha-D-glucose: S1004, R1005, D1007, N1279, N1307, H1310, H1323, S1326, G1327, T1328, D1347, and Q1348.

This sequence belongs to the glycosyltransferase 28 family.

The protein resides in the cytoplasm. It is found in the membrane. It carries out the reaction a sterol + UDP-alpha-D-glucose = a sterol 3-beta-D-glucoside + UDP + H(+). The enzyme catalyses ergosterol + UDP-alpha-D-glucose = ergosteryl 3-beta-D-glucoside + UDP + H(+). Functionally, sterol glycosyltransferase responsible for the glycosylation of ergosterol to form ergosterol-glucoside. The polypeptide is Sterol 3-beta-glucosyltransferase (Yarrowia lipolytica (strain CLIB 122 / E 150) (Yeast)).